We begin with the raw amino-acid sequence, 270 residues long: 4-hydroxy-tetrahydrodipicolinate reductase (270 aa).

NAD(+) contacts are provided by residues 9 to 14 (GAGGRM) and E35. An NADP(+)-binding site is contributed by R36. NAD(+)-binding positions include 99–101 (GTT) and 123–126 (ASNF). H156 functions as the Proton donor/acceptor in the catalytic mechanism. H157 is a (S)-2,3,4,5-tetrahydrodipicolinate binding site. The active-site Proton donor is the K160. 166–167 (GT) contacts (S)-2,3,4,5-tetrahydrodipicolinate.

The protein belongs to the DapB family.

Its subcellular location is the cytoplasm. The catalysed reaction is (S)-2,3,4,5-tetrahydrodipicolinate + NAD(+) + H2O = (2S,4S)-4-hydroxy-2,3,4,5-tetrahydrodipicolinate + NADH + H(+). It catalyses the reaction (S)-2,3,4,5-tetrahydrodipicolinate + NADP(+) + H2O = (2S,4S)-4-hydroxy-2,3,4,5-tetrahydrodipicolinate + NADPH + H(+). The protein operates within amino-acid biosynthesis; L-lysine biosynthesis via DAP pathway; (S)-tetrahydrodipicolinate from L-aspartate: step 4/4. Catalyzes the conversion of 4-hydroxy-tetrahydrodipicolinate (HTPA) to tetrahydrodipicolinate. In Haemophilus influenzae (strain PittGG), this protein is 4-hydroxy-tetrahydrodipicolinate reductase.